A 229-amino-acid polypeptide reads, in one-letter code: Cytochrome c oxidase subunit 2 (229 aa).

The Mitochondrial intermembrane segment spans residues 1–26 (MSTWANLGLQDSASPLMEQLIFFHDH). The chain crosses the membrane as a helical span at residues 27 to 48 (ALLILVMITVLVGYLMFMLFFN). The Mitochondrial matrix portion of the chain corresponds to 49–62 (SYVNRFLLHGQLIE). The helical transmembrane segment at 63 to 82 (MIWTILPAIILLFIAMPSLR) threads the bilayer. The Mitochondrial intermembrane portion of the chain corresponds to 83–229 (LLYLLDEINE…IKWISSTVNS (147 aa)). Cu cation-binding residues include histidine 161, cysteine 196, glutamate 198, cysteine 200, histidine 204, and methionine 207. A Mg(2+)-binding site is contributed by glutamate 198.

Belongs to the cytochrome c oxidase subunit 2 family. As to quaternary structure, component of the cytochrome c oxidase (complex IV, CIV), a multisubunit enzyme composed of a catalytic core of 3 subunits and several supernumerary subunits. The complex exists as a monomer or a dimer and forms supercomplexes (SCs) in the inner mitochondrial membrane with ubiquinol-cytochrome c oxidoreductase (cytochrome b-c1 complex, complex III, CIII). Cu cation is required as a cofactor.

It localises to the mitochondrion inner membrane. It catalyses the reaction 4 Fe(II)-[cytochrome c] + O2 + 8 H(+)(in) = 4 Fe(III)-[cytochrome c] + 2 H2O + 4 H(+)(out). In terms of biological role, component of the cytochrome c oxidase, the last enzyme in the mitochondrial electron transport chain which drives oxidative phosphorylation. The respiratory chain contains 3 multisubunit complexes succinate dehydrogenase (complex II, CII), ubiquinol-cytochrome c oxidoreductase (cytochrome b-c1 complex, complex III, CIII) and cytochrome c oxidase (complex IV, CIV), that cooperate to transfer electrons derived from NADH and succinate to molecular oxygen, creating an electrochemical gradient over the inner membrane that drives transmembrane transport and the ATP synthase. Cytochrome c oxidase is the component of the respiratory chain that catalyzes the reduction of oxygen to water. Electrons originating from reduced cytochrome c in the intermembrane space (IMS) are transferred via the dinuclear copper A center (CU(A)) of subunit 2 and heme A of subunit 1 to the active site in subunit 1, a binuclear center (BNC) formed by heme A3 and copper B (CU(B)). The BNC reduces molecular oxygen to 2 water molecules using 4 electrons from cytochrome c in the IMS and 4 protons from the mitochondrial matrix. This Drosophila lowei (Fruit fly) protein is Cytochrome c oxidase subunit 2 (mt:CoII).